We begin with the raw amino-acid sequence, 228 residues long: L-ribulose-5-phosphate 4-epimerase UlaF (228 aa).

Substrate contacts are provided by residues 26 to 27 (GN), 43 to 44 (SG), and 72 to 73 (SS). Zn(2+) is bound by residues Asp74, His93, and His95. The Proton donor/acceptor role is filled by Asp118. His167 is a binding site for Zn(2+). Tyr225 acts as the Proton donor/acceptor in catalysis.

This sequence belongs to the aldolase class II family. AraD/FucA subfamily. The cofactor is Zn(2+).

The enzyme catalyses L-ribulose 5-phosphate = D-xylulose 5-phosphate. The protein operates within cofactor degradation; L-ascorbate degradation; D-xylulose 5-phosphate from L-ascorbate: step 4/4. Its function is as follows. Catalyzes the isomerization of L-ribulose 5-phosphate to D-xylulose 5-phosphate. Is involved in the anaerobic L-ascorbate utilization. In Shigella boydii serotype 18 (strain CDC 3083-94 / BS512), this protein is L-ribulose-5-phosphate 4-epimerase UlaF.